The chain runs to 230 residues: 3,4-dihydroxy-2-butanone 4-phosphate synthase (230 aa).

D-ribulose 5-phosphate-binding positions include 42–43 (RE), Asp47, 155–159 (RRGHT), and Glu179. Glu43 is a binding site for Mg(2+). Mg(2+) is bound at residue His158.

This sequence belongs to the DHBP synthase family. In terms of assembly, homodimer. Mg(2+) serves as cofactor. Mn(2+) is required as a cofactor.

It catalyses the reaction D-ribulose 5-phosphate = (2S)-2-hydroxy-3-oxobutyl phosphate + formate + H(+). The protein operates within cofactor biosynthesis; riboflavin biosynthesis; 2-hydroxy-3-oxobutyl phosphate from D-ribulose 5-phosphate: step 1/1. In terms of biological role, catalyzes the conversion of D-ribulose 5-phosphate to formate and 3,4-dihydroxy-2-butanone 4-phosphate. In Bordetella bronchiseptica (strain ATCC BAA-588 / NCTC 13252 / RB50) (Alcaligenes bronchisepticus), this protein is 3,4-dihydroxy-2-butanone 4-phosphate synthase.